The following is a 221-amino-acid chain: Pectate lyase C (221 aa).

Positions Met1 to Ala27 are cleaved as a signal peptide.

The protein belongs to the polysaccharide lyase 3 family. Requires Ca(2+) as cofactor.

The protein localises to the secreted. The enzyme catalyses Eliminative cleavage of (1-&gt;4)-alpha-D-galacturonan to give oligosaccharides with 4-deoxy-alpha-D-galact-4-enuronosyl groups at their non-reducing ends.. It catalyses the reaction Eliminative cleavage of (1-&gt;4)-alpha-D-galacturonan methyl ester to give oligosaccharides with 4-deoxy-6-O-methyl-alpha-D-galact-4-enuronosyl groups at their non-reducing ends.. It functions in the pathway glycan metabolism; pectin degradation; 2-dehydro-3-deoxy-D-gluconate from pectin: step 2/5. Its function is as follows. Catalyzes the depolymerization of both polygalacturonate and pectins of methyl esterification degree from 22 to 89%, with an endo mode of action. In contrast to the majority of pectate lyases, displays high activity on highly methylated pectins. Is also able to cleave trigalacturonate to galacturonic acid and unsaturated digalacturonate. The polypeptide is Pectate lyase C (pelC) (Bacillus subtilis (strain 168)).